A 2641-amino-acid polypeptide reads, in one-letter code: CCR4-NOT transcription complex subunit let-711 (2641 aa).

The short motif at 660–664 (LSELL) is the LXXLL element. Disordered stretches follow at residues 771–887 (SGRS…QNAQ), 936–963 (TQRQ…PQQQ), 1197–1221 (EGGR…PAAA), 1518–1565 (QSKI…SQGA), and 2034–2054 (GMNN…AGLQ). 3 stretches are compositionally biased toward low complexity: residues 774–795 (SSSV…QQQQ), 802–839 (LPPS…SQQQ), and 853–877 (PAQF…HMMG). A compositionally biased stretch (pro residues) spans 951-960 (PQRPSGPPTP). Positions 1205–1221 (GSAQAGSASSTPTPAAA) are enriched in low complexity. Low complexity predominate over residues 2034 to 2046 (GMNNAMNNGAGNA). The short motif at 2341-2345 (LRVLL) is the LXXLL element. The tract at residues 2609 to 2641 (AQGSQPQAQPDGAPGPLGNNTGAANQQQNPNTN) is disordered.

The protein belongs to the CNOT1 family. As to quaternary structure, component of the CCR4-NOT complex at least composed of ccf-1, ccr-4 and let-711, which is required for germ cell development in hermaphrodites. Within the complex interacts with ccf-1 and ccr-4; the interactions are direct. As to expression, highly expressed in the germline of hermaphrodites.

The protein localises to the nucleus. Its function is as follows. Scaffolding component of the CCR4-NOT complex which is one of the major cellular mRNA deadenylases and is linked to various cellular processes including bulk mRNA degradation, miRNA-mediated repression, translational repression during translational initiation and general transcription regulation. Positively regulates the accumulation of the CCR4-NOT complex component ccr-1. Within the complex promotes germ cell development and fertility in hermaphrodites. Additional complex functions may be a consequence of its influence on mRNA expression. Its scaffolding function implies its interaction with the catalytic complex module and diverse RNA-binding proteins mediating the complex recruitment to selected mRNA 3'UTRs. Mediates the recruitment of the CCR4-NOT complex to miRNA targets and to the RISC complex. Acts as a transcriptional repressor. Represses the ligand-dependent transcriptional activation by nuclear receptors. In embryos, plays a role in female pronucleus and mitotic spindle positioning during the first cleavage divisions after fertilization. This may partly be through negatively regulating the accumulation of zyg-9 at the centrosome. Negatively regulates the formation of long astral microtubules in developing embryos. Required for the stabilization and degradation of maternal mRNAs such as nos-2 in somatic blastomeres. The chain is CCR4-NOT transcription complex subunit let-711 from Caenorhabditis elegans.